We begin with the raw amino-acid sequence, 309 residues long: Homoserine kinase (309 aa).

88-98 is an ATP binding site; that stretch reads PLARGLGSSAA.

Belongs to the GHMP kinase family. Homoserine kinase subfamily.

Its subcellular location is the cytoplasm. It carries out the reaction L-homoserine + ATP = O-phospho-L-homoserine + ADP + H(+). It participates in amino-acid biosynthesis; L-threonine biosynthesis; L-threonine from L-aspartate: step 4/5. Its function is as follows. Catalyzes the ATP-dependent phosphorylation of L-homoserine to L-homoserine phosphate. This chain is Homoserine kinase, found in Halalkalibacterium halodurans (strain ATCC BAA-125 / DSM 18197 / FERM 7344 / JCM 9153 / C-125) (Bacillus halodurans).